Consider the following 167-residue polypeptide: Transcription factor HES-5 (167 aa).

A bHLH domain is found at 16–72; the sequence is KNRLRKPVVEKMRRDRINSSIEQLKLLLEQEFARHQPNSKLEKADILEMAVSYLKHS. One can recognise an Orange domain in the interval 88 to 119; it reads YSEGYSWCLQEAVQFLTLHAASDTQMKLLYHF. A compositionally biased stretch (pro residues) spans 124–138; it reads APAAPAKEPPAPGAA. Residues 124 to 167 form a disordered region; sequence APAAPAKEPPAPGAAPQPARSSAKAAAAAVSTSRQPACGLWRPW. The segment covering 139-160 has biased composition (low complexity); that stretch reads PQPARSSAKAAAAAVSTSRQPA. Residues 164–167 carry the WRPW motif motif; the sequence is WRPW.

In terms of assembly, transcription repression requires formation of a complex with a corepressor protein of the Groucho/TLE family.

The protein localises to the nucleus. Functionally, transcriptional repressor of genes that require a bHLH protein for their transcription. Plays an important role as neurogenesis negative regulator. This chain is Transcription factor HES-5 (Hes5), found in Mus musculus (Mouse).